A 138-amino-acid chain; its full sequence is Hexon-interlacing protein (138 aa).

The stretch at Leu100–Gln127 forms a coiled coil.

It belongs to the adenoviridae hexon-interlacing protein family. In terms of assembly, homotrimer. Interacts with hexon protein; this interaction tethers the hexons together. Self-interacts with adjacent proteins. Interacts with kinesin light chain KLC1; this interaction leads to capsid disruption at the nuclear pore complex during virus entry into host cell.

It localises to the virion. It is found in the host nucleus. Its function is as follows. Structural component of the virion that acts as a cement protein on the capsid exterior and forms triskelion structures consisting of three molecules that stabilize three hexon trimers at the center of each icosahedral facet and fixes the peripentonal hexons. Dispensable for assembly. During virus entry, recruits the anterograde motor kinesin-1 to the capsid docked at the nuclear pore complex thereby subjecting the docked capsid to a pulling force. The resulting tension leads to capsid disruption, dispersion of capsid fragments toward cell periphery and eventually viral DNA entry into the host nucleus. The sequence is that of Hexon-interlacing protein from Human adenovirus B serotype 7 (HAdV-7).